The following is a 384-amino-acid chain: tRNA(Met) cytidine acetate ligase (384 aa).

ATP-binding positions include 7 to 20, glycine 101, asparagine 153, and arginine 178; that span reads VAEYNPFHSGHEFL.

Belongs to the TmcAL family.

It localises to the cytoplasm. The catalysed reaction is cytidine(34) in elongator tRNA(Met) + acetate + ATP = N(4)-acetylcytidine(34) in elongator tRNA(Met) + AMP + diphosphate. Its function is as follows. Catalyzes the formation of N(4)-acetylcytidine (ac(4)C) at the wobble position of elongator tRNA(Met), using acetate and ATP as substrates. First activates an acetate ion to form acetyladenylate (Ac-AMP) and then transfers the acetyl group to tRNA to form ac(4)C34. The polypeptide is tRNA(Met) cytidine acetate ligase (Lactobacillus delbrueckii subsp. bulgaricus (strain ATCC 11842 / DSM 20081 / BCRC 10696 / JCM 1002 / NBRC 13953 / NCIMB 11778 / NCTC 12712 / WDCM 00102 / Lb 14)).